Here is a 220-residue protein sequence, read N- to C-terminus: Riboflavin kinase (220 aa).

Positions M1 to N92 are H-T-H motif-like. The riboflavin kinase stretch occupies residues V93–T220. A CDP-binding site is contributed by G102–R107. Positions 131 and 133 each coordinate Mg(2+). 2 residues coordinate FMN: T188 and E195. K200–R203 contacts CDP.

Belongs to the archaeal riboflavin kinase family. Requires Mg(2+) as cofactor.

It carries out the reaction riboflavin + CTP = CDP + FMN + H(+). The protein operates within cofactor biosynthesis; FMN biosynthesis; FMN from riboflavin (CTP route): step 1/1. In terms of biological role, catalyzes the CTP-dependent phosphorylation of riboflavin (vitamin B2) to form flavin mononucleotide (FMN). The sequence is that of Riboflavin kinase (ribK) from Thermoplasma acidophilum (strain ATCC 25905 / DSM 1728 / JCM 9062 / NBRC 15155 / AMRC-C165).